The sequence spans 515 residues: 2,3-bisphosphoglycerate-independent phosphoglycerate mutase (515 aa).

Residues D14 and S64 each contribute to the Mn(2+) site. Catalysis depends on S64, which acts as the Phosphoserine intermediate. Substrate contacts are provided by residues H125, 155 to 156 (RD), R187, R193, 263 to 266 (RADR), and K337. The Mn(2+) site is built by D404, H408, D445, H446, and H464.

Belongs to the BPG-independent phosphoglycerate mutase family. In terms of assembly, monomer. Requires Mn(2+) as cofactor.

The catalysed reaction is (2R)-2-phosphoglycerate = (2R)-3-phosphoglycerate. It functions in the pathway carbohydrate degradation; glycolysis; pyruvate from D-glyceraldehyde 3-phosphate: step 3/5. Functionally, catalyzes the interconversion of 2-phosphoglycerate and 3-phosphoglycerate. The sequence is that of 2,3-bisphosphoglycerate-independent phosphoglycerate mutase from Pseudomonas aeruginosa (strain UCBPP-PA14).